Reading from the N-terminus, the 182-residue chain is NADH-quinone oxidoreductase subunit I (182 aa).

4Fe-4S ferredoxin-type domains are found at residues 52 to 82 and 92 to 121; these read LTRD…LQKA and DFFR…LTPD. [4Fe-4S] cluster-binding residues include Cys62, Cys65, Cys68, Cys72, Cys101, Cys104, Cys107, and Cys111.

Belongs to the complex I 23 kDa subunit family. NDH-1 is composed of 13 different subunits. Subunits NuoA, H, J, K, L, M, N constitute the membrane sector of the complex. The cofactor is [4Fe-4S] cluster.

The protein resides in the cell inner membrane. It catalyses the reaction a quinone + NADH + 5 H(+)(in) = a quinol + NAD(+) + 4 H(+)(out). In terms of biological role, NDH-1 shuttles electrons from NADH, via FMN and iron-sulfur (Fe-S) centers, to quinones in the respiratory chain. The immediate electron acceptor for the enzyme in this species is believed to be ubiquinone. Couples the redox reaction to proton translocation (for every two electrons transferred, four hydrogen ions are translocated across the cytoplasmic membrane), and thus conserves the redox energy in a proton gradient. The chain is NADH-quinone oxidoreductase subunit I from Pseudomonas fluorescens (strain ATCC BAA-477 / NRRL B-23932 / Pf-5).